A 64-amino-acid chain; its full sequence is Large ribosomal subunit protein uL30 (64 aa).

This sequence belongs to the universal ribosomal protein uL30 family. As to quaternary structure, part of the 50S ribosomal subunit.

This chain is Large ribosomal subunit protein uL30, found in Bradyrhizobium diazoefficiens (strain JCM 10833 / BCRC 13528 / IAM 13628 / NBRC 14792 / USDA 110).